Consider the following 337-residue polypeptide: Heat-inducible transcription repressor HrcA (337 aa).

The protein belongs to the HrcA family.

Functionally, negative regulator of class I heat shock genes (grpE-dnaK-dnaJ and groELS operons). Prevents heat-shock induction of these operons. The protein is Heat-inducible transcription repressor HrcA of Kocuria rhizophila (strain ATCC 9341 / DSM 348 / NBRC 103217 / DC2201).